Consider the following 332-residue polypeptide: Hygromycin-B 7''-O-kinase (332 aa).

Residue Asp-223 is the Proton acceptor of the active site.

This sequence belongs to the aminoglycoside phosphotransferase family.

It catalyses the reaction hygromycin B + ATP = 7''-O-phosphohygromycin B + ADP + H(+). The aminoglycoside phosphotransferases achieve inactivation of their antibiotic substrates by phosphorylation. This is Hygromycin-B 7''-O-kinase (hyg) from Streptomyces hygroscopicus.